Reading from the N-terminus, the 84-residue chain is MYB-like transcription factor TCL1 (84 aa).

One can recognise a Myb-like domain in the interval 36-73 (TEQEEDLIFRMYRLVGDRWDLIARRVVGREAKEIERYW).

In terms of tissue distribution, expressed in inflorescences and trichomes of rosette and cauline leaves.

Its subcellular location is the nucleus. In terms of biological role, MYB-type transcription factor involved in trichome cell specification. Acts as a negative regulator of trichome patterning and formation by direct binding to the cis-acting regulatory elements of GL1, thus suppressing the expression of GL1. This Arabidopsis thaliana (Mouse-ear cress) protein is MYB-like transcription factor TCL1 (TCL1).